Here is a 727-residue protein sequence, read N- to C-terminus: Prolyl endopeptidase-like (727 aa).

An N-acetylmethionine modification is found at methionine 1. Residues serine 559, aspartate 645, and histidine 690 each act as charge relay system in the active site.

The protein belongs to the peptidase S9A family. Homodimer. Interacts with the AP-1 complex. Expressed in pyramidal neurons of the temporal cortex and neocortex (at protein level). Widely expressed. Expressed at higher level in brain, skeletal muscle, heart and kidney. Expressed at the endplates in the neuromuscular junction.

It is found in the cytoplasm. Its subcellular location is the cytosol. The protein resides in the golgi apparatus. The protein localises to the trans-Golgi network. It localises to the cytoskeleton. It is found in the nucleus. Inhibited by PMSF and Prefabloc, as well as leupeptin at high concentrations. Partially inhibited by TPCK, a chymotrypsin inhibitor and E64, a cysteine protease inhibitor. Not affected by 4-amidinophenyl-methanesulfonyl fluoride (APMSF), pepstatin or EDTA. Inhibited by 1-isobutyl-3-oxo-3,5,6,7-tetrahydro-2H-cyclopenta[c]pyridine-4-carbonitrile. In terms of biological role, serine peptidase whose precise substrate specificity remains unclear. Does not cleave peptides after a arginine or lysine residue. Regulates trans-Golgi network morphology and sorting by regulating the membrane binding of the AP-1 complex. May play a role in the regulation of synaptic vesicle exocytosis. This Homo sapiens (Human) protein is Prolyl endopeptidase-like (PREPL).